The primary structure comprises 150 residues: Large ribosomal subunit protein uL13 (150 aa).

The interval 129-150 (PEHPHSAQRPQTLQLNPAASSQ) is disordered. Over residues 136-150 (QRPQTLQLNPAASSQ) the composition is skewed to polar residues.

The protein belongs to the universal ribosomal protein uL13 family. In terms of assembly, part of the 50S ribosomal subunit.

This protein is one of the early assembly proteins of the 50S ribosomal subunit, although it is not seen to bind rRNA by itself. It is important during the early stages of 50S assembly. The chain is Large ribosomal subunit protein uL13 from Prochlorococcus marinus (strain MIT 9303).